Here is a 430-residue protein sequence, read N- to C-terminus: Adenylosuccinate synthetase (430 aa).

Residues 12–18 (GDEGKGK) and 40–42 (GHT) contribute to the GTP site. The active-site Proton acceptor is Asp-13. Mg(2+) is bound by residues Asp-13 and Gly-40. Residues 13-16 (DEGK), 38-41 (NAGH), Thr-128, Arg-142, Gln-223, Thr-238, and Arg-302 contribute to the IMP site. Residue His-41 is the Proton donor of the active site. Substrate is bound at residue 298 to 304 (TTTGRPR). GTP is bound by residues Arg-304, 330-332 (CID), and 412-414 (SVG).

The protein belongs to the adenylosuccinate synthetase family. In terms of assembly, homodimer. Mg(2+) serves as cofactor.

The protein resides in the cytoplasm. It carries out the reaction IMP + L-aspartate + GTP = N(6)-(1,2-dicarboxyethyl)-AMP + GDP + phosphate + 2 H(+). It functions in the pathway purine metabolism; AMP biosynthesis via de novo pathway; AMP from IMP: step 1/2. In terms of biological role, plays an important role in the de novo pathway of purine nucleotide biosynthesis. Catalyzes the first committed step in the biosynthesis of AMP from IMP. The protein is Adenylosuccinate synthetase of Streptococcus thermophilus (strain CNRZ 1066).